Here is a 483-residue protein sequence, read N- to C-terminus: Glutamyl-tRNA(Gln) amidotransferase subunit A (483 aa).

Active-site charge relay system residues include K75 and S150. The Acyl-ester intermediate role is filled by S174.

The protein belongs to the amidase family. GatA subfamily. Heterotrimer of A, B and C subunits.

It carries out the reaction L-glutamyl-tRNA(Gln) + L-glutamine + ATP + H2O = L-glutaminyl-tRNA(Gln) + L-glutamate + ADP + phosphate + H(+). Its function is as follows. Allows the formation of correctly charged Gln-tRNA(Gln) through the transamidation of misacylated Glu-tRNA(Gln) in organisms which lack glutaminyl-tRNA synthetase. The reaction takes place in the presence of glutamine and ATP through an activated gamma-phospho-Glu-tRNA(Gln). This chain is Glutamyl-tRNA(Gln) amidotransferase subunit A, found in Legionella pneumophila subsp. pneumophila (strain Philadelphia 1 / ATCC 33152 / DSM 7513).